Here is a 321-residue protein sequence, read N- to C-terminus: Small ribosomal subunit biogenesis GTPase RsgA (321 aa).

Residues 89 to 248 (QSWINRPPVA…VADTPGFNRP (160 aa)) form the CP-type G domain. GTP is bound by residues 138–141 (TKRD) and 190–198 (GPSGVGKTS). The Zn(2+) site is built by cysteine 273, cysteine 278, histidine 280, and cysteine 286.

The protein belongs to the TRAFAC class YlqF/YawG GTPase family. RsgA subfamily. Monomer. Associates with 30S ribosomal subunit, binds 16S rRNA. Zn(2+) serves as cofactor.

It is found in the cytoplasm. Functionally, one of several proteins that assist in the late maturation steps of the functional core of the 30S ribosomal subunit. Helps release RbfA from mature subunits. May play a role in the assembly of ribosomal proteins into the subunit. Circularly permuted GTPase that catalyzes slow GTP hydrolysis, GTPase activity is stimulated by the 30S ribosomal subunit. The sequence is that of Small ribosomal subunit biogenesis GTPase RsgA from Prochlorococcus marinus (strain MIT 9313).